Here is a 475-residue protein sequence, read N- to C-terminus: Ribulose bisphosphate carboxylase large chain (475 aa).

Residues 1–2 (MS) constitute a propeptide that is removed on maturation. N-acetylproline is present on P3. K14 carries the N6,N6,N6-trimethyllysine modification. 2 residues coordinate substrate: N123 and T173. The active-site Proton acceptor is the K175. K177 contributes to the substrate binding site. Residues K201, D203, and E204 each coordinate Mg(2+). K201 is subject to N6-carboxylysine. H294 serves as the catalytic Proton acceptor. Residues R295, H327, and S379 each coordinate substrate.

Belongs to the RuBisCO large chain family. Type I subfamily. Heterohexadecamer of 8 large chains and 8 small chains; disulfide-linked. The disulfide link is formed within the large subunit homodimers. The cofactor is Mg(2+). Post-translationally, the disulfide bond which can form in the large chain dimeric partners within the hexadecamer appears to be associated with oxidative stress and protein turnover.

Its subcellular location is the plastid. It localises to the chloroplast. The catalysed reaction is 2 (2R)-3-phosphoglycerate + 2 H(+) = D-ribulose 1,5-bisphosphate + CO2 + H2O. It carries out the reaction D-ribulose 1,5-bisphosphate + O2 = 2-phosphoglycolate + (2R)-3-phosphoglycerate + 2 H(+). In terms of biological role, ruBisCO catalyzes two reactions: the carboxylation of D-ribulose 1,5-bisphosphate, the primary event in carbon dioxide fixation, as well as the oxidative fragmentation of the pentose substrate in the photorespiration process. Both reactions occur simultaneously and in competition at the same active site. The protein is Ribulose bisphosphate carboxylase large chain of Angiopteris lygodiifolia (Turnip fern).